Reading from the N-terminus, the 469-residue chain is 3-isopropylmalate dehydratase large subunit (469 aa).

[4Fe-4S] cluster is bound by residues Cys-347, Cys-408, and Cys-411.

This sequence belongs to the aconitase/IPM isomerase family. LeuC type 1 subfamily. In terms of assembly, heterodimer of LeuC and LeuD. Requires [4Fe-4S] cluster as cofactor.

The catalysed reaction is (2R,3S)-3-isopropylmalate = (2S)-2-isopropylmalate. It functions in the pathway amino-acid biosynthesis; L-leucine biosynthesis; L-leucine from 3-methyl-2-oxobutanoate: step 2/4. Functionally, catalyzes the isomerization between 2-isopropylmalate and 3-isopropylmalate, via the formation of 2-isopropylmaleate. This chain is 3-isopropylmalate dehydratase large subunit, found in Actinobacillus succinogenes (strain ATCC 55618 / DSM 22257 / CCUG 43843 / 130Z).